A 699-amino-acid chain; its full sequence is LMBR1 domain-containing protein 2 homolog (699 aa).

The Extracellular portion of the chain corresponds to 1 to 3; that stretch reads MAY. The chain crosses the membrane as a helical span at residues 4-26; that stretch reads LLTFGIIAALCLASISLYRYGNI. Residues 27 to 30 are Cytoplasmic-facing; it reads PRQH. Residues 31–51 form a helical membrane-spanning segment; sequence ILVTLSVLTAWCFSFLIVFTI. Residues 52-106 lie on the Extracellular side of the membrane; it reads PLDVTSTLYRQCLAEHKLALDAAGNASTTANITPPPECQEPWGMVPESVFPNLWR. A glycan (N-linked (GlcNAc...) asparagine) is linked at Asn-76. A helical membrane pass occupies residues 107–127; it reads IIYWSSQFLTWLIMPLMQSYL. Over 128 to 144 the chain is Cytoplasmic; it reads KAGDFTIKGKLKSALIE. Residues 145 to 165 traverse the membrane as a helical segment; the sequence is NAIYYGSYLFICGVLLIYIAV. The Extracellular segment spans residues 166 to 181; the sequence is KGVPLDWQKLKAIASS. A helical transmembrane segment spans residues 182 to 202; sequence ASNTWGLFLLILLLGYALVEV. Residues 203–381 lie on the Cytoplasmic side of the membrane; the sequence is PRSLWNNAKP…ECLLKAPFLK (179 aa). A helical membrane pass occupies residues 382 to 402; that stretch reads TLCVVTATMSAMVVWSEVTFF. The Extracellular segment spans residues 403-426; that stretch reads SRDPVLSIFANVIYLAKESYDFFT. A helical membrane pass occupies residues 427–447; it reads IEVFSMMVLCYFFYCTYSTIL. Residues 448 to 467 are Cytoplasmic-facing; sequence RIRFLNLYYLAPHHQTNEHS. The helical transmembrane segment at 468 to 488 threads the bilayer; sequence LIFSGMLLCRLTPPMCLNFLG. At 489–514 the chain is on the extracellular side; the sequence is LIHMDSHIIPERMMETYYTRIMGHMD. Residues 515–535 form a helical membrane-spanning segment; the sequence is VIGIISNGFNIYFPMCMLAFC. Residues 536 to 699 are Cytoplasmic-facing; the sequence is LSTWFSLGSR…PPPRGLFDDV (164 aa). Positions 564 to 592 form a coiled coil; the sequence is ELVQEGKDLIAREKRRRQRAEEAMARRRD. Positions 669-699 are disordered; that stretch reads FRGTSELDPDYEAENERRIVGPPPRGLFDDV.

It belongs to the LIMR family.

The protein resides in the membrane. The chain is LMBR1 domain-containing protein 2 homolog from Drosophila pseudoobscura pseudoobscura (Fruit fly).